The primary structure comprises 696 residues: Interleukin-1 receptor accessory protein-like 1 (696 aa).

The N-terminal stretch at 1 to 24 (MKAPIPHLILLYATFTQSLKVVTK) is a signal peptide. The 110-residue stretch at 25–134 (RGSADGCTDW…YCMKVSISLT (110 aa)) folds into the Ig-like C2-type 1 domain. Residues 25-357 (RGSADGCTDW…LLHKRELMYT (333 aa)) are Extracellular-facing. 2 disulfide bridges follow: cysteine 31/cysteine 126 and cysteine 53/cysteine 118. Residues asparagine 63, asparagine 122, and asparagine 138 are each glycosylated (N-linked (GlcNAc...) asparagine). Cystine bridges form between cysteine 143–cysteine 185 and cysteine 164–cysteine 216. Ig-like C2-type domains lie at 143-232 (CYNS…TELT) and 242-350 (PKLL…VLLH). N-linked (GlcNAc...) asparagine glycans are attached at residues asparagine 213, asparagine 264, and asparagine 331. Residues cysteine 267 and cysteine 334 are joined by a disulfide bond. The chain crosses the membrane as a helical span at residues 358-378 (VELAGGLGAILLLLVCSVTIY). Over 379–696 (KCYKIEIMLF…RETSISSVIW (318 aa)) the chain is Cytoplasmic. A TIR domain is found at 403-559 (KDYDAYLSYT…KFWKRLQYEM (157 aa)). The active site involves glutamate 491. The interaction with NCS1 stretch occupies residues 549 to 644 (SKFWKRLQYE…TGTLPLTSIG (96 aa)). The segment at 659–680 (GQRPQTKSSREPNPDEAHTNSA) is disordered. Residues 666–676 (SSREPNPDEAH) are compositionally biased toward basic and acidic residues.

It belongs to the interleukin-1 receptor family. Homodimer. Interacts (calcium-independent) with NCS1/FREQ. Interacts (via the first immunoglobilin domain) with PTPRD (via the second immunoglobilin domain); this interaction is PTPRD-splicing-dependent and induces pre- and post-synaptic differentiation of neurons and is required for IL1RAPL1-mediated synapse formation.

It localises to the cell membrane. Its subcellular location is the cytoplasm. It is found in the cell projection. The protein resides in the axon. The protein localises to the dendrite. The catalysed reaction is NAD(+) + H2O = ADP-D-ribose + nicotinamide + H(+). In terms of biological role, may regulate secretion and presynaptic differentiation through inhibition of the activity of N-type voltage-gated calcium channel. May activate the MAP kinase JNK. Plays a role in neurite outgrowth. During dendritic spine formation can bidirectionally induce pre- and post-synaptic differentiation of neurons by trans-synaptically binding to PTPRD. The sequence is that of Interleukin-1 receptor accessory protein-like 1 (Il1rapl1) from Rattus norvegicus (Rat).